The sequence spans 233 residues: Delta-actitoxin-Amc1a (233 aa).

The first 18 residues, 1-18 (MKRIFIVALLFATCLVNA), serve as a signal peptide directing secretion. 2 consecutive propeptides follow at residues 19–29 (KPSINDADIKR) and 30–33 (EPEP). Pro39 carries the post-translational modification Hydroxyproline. Intrachain disulfides connect Cys40-Cys51 and Cys43-Cys58. Propeptides lie at residues 61–63 (RKR) and 64–67 (EPEP). Position 73 is a hydroxyproline (Pro73). Disulfide bonds link Cys74–Cys85 and Cys77–Cys92. Propeptides lie at residues 95–97 (RKR) and 98–101 (EPEP). Position 107 is a hydroxyproline (Pro107). 2 cysteine pairs are disulfide-bonded: Cys108/Cys119 and Cys111/Cys126. 2 consecutive propeptides follow at residues 129-131 (RKR) and 132-135 (EPEP). Pro141 bears the Hydroxyproline mark. Intrachain disulfides connect Cys142/Cys153 and Cys145/Cys160. 2 consecutive propeptides follow at residues 163-165 (RKR) and 166-169 (EPEP). The residue at position 175 (Pro175) is a Hydroxyproline. 2 disulfides stabilise this stretch: Cys176-Cys187 and Cys179-Cys194. Propeptides lie at residues 197–199 (RKR) and 200–203 (EPEP). Pro209 bears the Hydroxyproline mark. 2 disulfides stabilise this stretch: Cys210-Cys221 and Cys213-Cys228. Residues 231–233 (RKR) constitute a propeptide that is removed on maturation.

It belongs to the sea anemone BBH family. Post-translationally, each Am I peptide may contain 2 disulfide bonds. In terms of processing, the precursor protein seems to be processed in the following sequence: release of the signal peptide and of the propeptide, production of six identical 34-residue peptides by cleavage between Arg and Glu, release of four N-terminal and three C-terminal residues from each peptide and hydroxylation of each Pro in position 6 of the resulting 27-residue peptides.

The protein resides in the secreted. Its subcellular location is the nematocyst. May inhibit voltage-gated sodium channels (Nav). The chain is Delta-actitoxin-Amc1a from Antheopsis maculata (Sea anemone).